The chain runs to 431 residues: Adenylosuccinate synthetase (431 aa).

Residues 13-19 (GDEGKGK) and 41-43 (GHT) contribute to the GTP site. Asp-14 acts as the Proton acceptor in catalysis. Positions 14 and 41 each coordinate Mg(2+). Residues 14–17 (DEGK), 39–42 (NAGH), Thr-130, Arg-144, Gln-225, Thr-240, and Arg-304 each bind IMP. The active-site Proton donor is His-42. Residue 300-306 (AVTGRPR) participates in substrate binding. Residues Arg-306, 332–334 (KLD), and 415–417 (STG) contribute to the GTP site.

It belongs to the adenylosuccinate synthetase family. Homodimer. Mg(2+) is required as a cofactor.

It is found in the cytoplasm. The catalysed reaction is IMP + L-aspartate + GTP = N(6)-(1,2-dicarboxyethyl)-AMP + GDP + phosphate + 2 H(+). Its pathway is purine metabolism; AMP biosynthesis via de novo pathway; AMP from IMP: step 1/2. In terms of biological role, plays an important role in the de novo pathway of purine nucleotide biosynthesis. Catalyzes the first committed step in the biosynthesis of AMP from IMP. The protein is Adenylosuccinate synthetase of Legionella pneumophila subsp. pneumophila (strain Philadelphia 1 / ATCC 33152 / DSM 7513).